A 361-amino-acid chain; its full sequence is MTQVYNFSAGPAMLPVEVLRRAEQELRNWHGLGTSVMEISHRSKEFMQVAEESEKDLRDLLQIPANYKVLFCHGGARAQFAAVPLNLLGDRNSADYIDGGYWAHSAIKEAQKYCTPNVIDVTTHDNGLTGIQPMKQWKLSDNAAYVHYCPNETIDGVAINEQPDFGNKVVVADYSSSILSRPIDISRYGVIYAGAQKNIGPAGLTLVIVREDLLGKAHTALPSILDYKVLADNDSMFNTPPTFAWYLSGLVFKWLKEQGGLCEMEKRNQAKAELLYGAIDRTGFYRNQVAITNRSWMNVPFQMADASLDKLFLREAEAQGLQALKGHRVAGGMRASIYNAMPIEGVKALTDFMADFERRHG.

Residue arginine 42 coordinates L-glutamate. Pyridoxal 5'-phosphate contacts are provided by residues 76-77 (AR), tryptophan 102, threonine 153, aspartate 173, and glutamine 196. At lysine 197 the chain carries N6-(pyridoxal phosphate)lysine. Pyridoxal 5'-phosphate is bound at residue 238–239 (NT).

Belongs to the class-V pyridoxal-phosphate-dependent aminotransferase family. SerC subfamily. In terms of assembly, homodimer. The cofactor is pyridoxal 5'-phosphate.

It localises to the cytoplasm. It carries out the reaction O-phospho-L-serine + 2-oxoglutarate = 3-phosphooxypyruvate + L-glutamate. The enzyme catalyses 4-(phosphooxy)-L-threonine + 2-oxoglutarate = (R)-3-hydroxy-2-oxo-4-phosphooxybutanoate + L-glutamate. It functions in the pathway amino-acid biosynthesis; L-serine biosynthesis; L-serine from 3-phospho-D-glycerate: step 2/3. Its pathway is cofactor biosynthesis; pyridoxine 5'-phosphate biosynthesis; pyridoxine 5'-phosphate from D-erythrose 4-phosphate: step 3/5. Functionally, catalyzes the reversible conversion of 3-phosphohydroxypyruvate to phosphoserine and of 3-hydroxy-2-oxo-4-phosphonooxybutanoate to phosphohydroxythreonine. The chain is Phosphoserine aminotransferase from Yersinia pestis (strain Pestoides F).